The primary structure comprises 334 residues: Glycosylinositol phosphorylceramide mannosyl transferase 1 (334 aa).

Residues 1 to 26 (MGGGEVSKEMGACSLAYRRGDQKLRK) are Cytoplasmic-facing. A helical; Signal-anchor for type II membrane protein transmembrane segment spans residues 27 to 49 (FVTARSTKFLLFCCIAFVLVTIV). Topologically, residues 50 to 334 (CRSSRPWVNS…AVDSRNLWFW (285 aa)) are lumenal. N58 is a glycosylation site (N-linked (GlcNAc...) asparagine). Substrate is bound by residues 145 to 150 (DSLNNR), 166 to 168 (DDD), R196, and 258 to 262 (RNCED). D168 is a binding site for Mn(2+). Residues C260 and C305 are joined by a disulfide bond. The active site involves D262. A glycan (N-linked (GlcNAc...) asparagine) is linked at N271. Residues 289 to 302 (STGI…TEKR) and 292 to 302 (ISSIGGHTEKR) contribute to the substrate site.

The protein belongs to the glycosyltransferase 64 family. Requires Mn(2+) as cofactor. Expressed in leaves, roots, stem, and flowers.

It is found in the golgi apparatus membrane. It participates in protein modification; protein glycosylation. It functions in the pathway sphingolipid metabolism. Mannosyl transferase (ManT) required for the biosynthesis of mannose-carrying glycosylinositol phosphorylceramides (GIPCs). Maybe involved in cell-cell adhesion that maintains the integrity of organs by providing mechanical strength and facilitating the movement of metabolites throughout the plant during development. Prevents abscisic acid- (ABA-) mediated effects on development (e.g. cell size, flowering time, senescence). Probably implicated in beta-(1,4)-galactan biosynthesis thus being a cell-wall synthesis-related (CWSR) protein. The chain is Glycosylinositol phosphorylceramide mannosyl transferase 1 from Arabidopsis thaliana (Mouse-ear cress).